A 117-amino-acid polypeptide reads, in one-letter code: Protein P16 (117 aa).

The chain crosses the membrane as a helical span at residues 7-24 (LYWVGGGLVLILIWLWFR).

It localises to the virion membrane. Functionally, protein of the infection vertex complex, which increases the vertex stability. Anchors the vertex structure to the viral membrane. Essential for viral infectivity. This chain is Protein P16 (XVI), found in Enterobacteria phage PRD1 (Bacteriophage PRD1).